A 771-amino-acid chain; its full sequence is U-box domain-containing protein 6 (771 aa).

In terms of domain architecture, U-box spans 274–348 (IPPEELRCPI…ASWCEQNGIT (75 aa)). The interval 394–415 (EESSTIESERQQKEKNNAPDEV) is disordered. The segment covering 400–411 (ESERQQKEKNNA) has biased composition (basic and acidic residues). ARM repeat units lie at residues 456–499 (EEAR…NLAV), 502–542 (NRNK…CLEK), 544–581 (KPVI…NLST), 583–622 (SPNI…NLAS), and 625–664 (EGKE…ILCT). Over residues 706–722 (EQRHRDQPSPNKEEAPR) the composition is skewed to basic and acidic residues. The disordered stretch occupies residues 706–751 (EQRHRDQPSPNKEEAPRKTVSAPMAIPAPVSAPESEVKPLTKSISR).

The catalysed reaction is S-ubiquitinyl-[E2 ubiquitin-conjugating enzyme]-L-cysteine + [acceptor protein]-L-lysine = [E2 ubiquitin-conjugating enzyme]-L-cysteine + N(6)-ubiquitinyl-[acceptor protein]-L-lysine.. The protein operates within protein modification; protein ubiquitination. Functionally, functions as an E3 ubiquitin ligase. In Arabidopsis thaliana (Mouse-ear cress), this protein is U-box domain-containing protein 6 (PUB6).